Here is a 444-residue protein sequence, read N- to C-terminus: UDP-N-acetylmuramate--L-alanine ligase (444 aa).

110–116 (GAHGKTS) is a binding site for ATP.

The protein belongs to the MurCDEF family.

It localises to the cytoplasm. It carries out the reaction UDP-N-acetyl-alpha-D-muramate + L-alanine + ATP = UDP-N-acetyl-alpha-D-muramoyl-L-alanine + ADP + phosphate + H(+). The protein operates within cell wall biogenesis; peptidoglycan biosynthesis. Its function is as follows. Cell wall formation. The chain is UDP-N-acetylmuramate--L-alanine ligase from Streptococcus pneumoniae (strain Hungary19A-6).